The primary structure comprises 422 residues: MEKEQETLRAWKDRVARELDRVVAFWLDHSHDQEQGGFFTCLGRDGQVYDDLKYVWLQGRQVWMYCRLYRQFERFRRPELLNAAKAGGEFLLRYAQVAPPAKKCAFVLTRDGRPVKVQRTIFSECFYTMAMNELWRVTGDARYQNEAMEMMDQIVSWVREDPSGLGRPQLPGAPASESMAVPMMLLNLVEQLGEADEELAGISAELGDWCAQRILQHVQRGGQAVLENVSEDGEELSGCLGRHQNPGHALEAGWFLLRYAIQRGDAKLRAHVIDKFLLLPFHSGWDPEHGGLFYFQDADGLCPTQLEWAMKLWWPHSEAMIAFLMGYSETGDPALLRIFYQVAEYTFHRFRDPEYGEWFGYLNRDGKVALTIKGGPFKGCFHVPRCLAMCEEMLNNLLSRLAPASALSTRSPPAGPTRPGAE.

Positions 185–206 are leucine-zipper; the sequence is LLNLVEQLGEADEELAGISAEL.

Belongs to the N-acylglucosamine 2-epimerase family. In terms of assembly, homodimer. Forms a heterodimer with renin and inhibits its activity.

It catalyses the reaction an N-acyl-D-glucosamine = an N-acyl-D-mannosamine. The protein operates within amino-sugar metabolism; N-acetylneuraminate degradation. Functionally, catalyzes the interconversion of N-acetylglucosamine to N-acetylmannosamine. Involved in the N-glycolylneuraminic acid (Neu5Gc) degradation pathway. This chain is N-acylglucosamine 2-epimerase (RENBP), found in Bos taurus (Bovine).